Reading from the N-terminus, the 202-residue chain is MKLLHIDSSVLAEHSVSRQLTARIVTEWQATHPGTAVEYLDLAQDTPATLSGAELAARMTPADSRSAEQTAAAARTEAFLQQFLAANVIVVGAPMYNFSIPSQLKNWIDCIAQAGRTFKYTETGPVGLAGNKTVIVASSRGGVYSTSEALRALDHQESYLRTVLGFMGIDNVRIVRAEGVNQGADRRSQALAAAEADIATLV.

Residues Ser9, 15–17 (SVS), 95–98 (MYNF), and 139–142 (SRGG) contribute to the FMN site.

Belongs to the azoreductase type 1 family. As to quaternary structure, homodimer. It depends on FMN as a cofactor.

It carries out the reaction 2 a quinone + NADH + H(+) = 2 a 1,4-benzosemiquinone + NAD(+). The catalysed reaction is N,N-dimethyl-1,4-phenylenediamine + anthranilate + 2 NAD(+) = 2-(4-dimethylaminophenyl)diazenylbenzoate + 2 NADH + 2 H(+). Functionally, quinone reductase that provides resistance to thiol-specific stress caused by electrophilic quinones. In terms of biological role, also exhibits azoreductase activity. Catalyzes the reductive cleavage of the azo bond in aromatic azo compounds to the corresponding amines. The polypeptide is FMN-dependent NADH:quinone oxidoreductase (Laribacter hongkongensis (strain HLHK9)).